The chain runs to 184 residues: Peptide deformylase (184 aa).

Residues Cys-98 and His-140 each contribute to the Fe cation site. The active site involves Glu-141. Residue His-144 participates in Fe cation binding.

This sequence belongs to the polypeptide deformylase family. The cofactor is Fe(2+).

It carries out the reaction N-terminal N-formyl-L-methionyl-[peptide] + H2O = N-terminal L-methionyl-[peptide] + formate. Functionally, removes the formyl group from the N-terminal Met of newly synthesized proteins. Requires at least a dipeptide for an efficient rate of reaction. N-terminal L-methionine is a prerequisite for activity but the enzyme has broad specificity at other positions. In Bacteroides fragilis (strain ATCC 25285 / DSM 2151 / CCUG 4856 / JCM 11019 / LMG 10263 / NCTC 9343 / Onslow / VPI 2553 / EN-2), this protein is Peptide deformylase.